The chain runs to 197 residues: Small ribosomal subunit protein uS4 (197 aa).

One can recognise an S4 RNA-binding domain in the interval serine 88–asparagine 150.

It belongs to the universal ribosomal protein uS4 family. Part of the 30S ribosomal subunit. Contacts protein S5. The interaction surface between S4 and S5 is involved in control of translational fidelity.

In terms of biological role, one of the primary rRNA binding proteins, it binds directly to 16S rRNA where it nucleates assembly of the body of the 30S subunit. Functionally, with S5 and S12 plays an important role in translational accuracy. In Azobacteroides pseudotrichonymphae genomovar. CFP2, this protein is Small ribosomal subunit protein uS4.